The sequence spans 301 residues: Nucleotide-binding protein ELI_02120 (301 aa).

Residue 12-19 coordinates ATP; sequence GMSGAGKS. 62–65 contributes to the GTP binding site; sequence DSRT.

Belongs to the RapZ-like family.

Displays ATPase and GTPase activities. This chain is Nucleotide-binding protein ELI_02120, found in Erythrobacter litoralis (strain HTCC2594).